Here is a 364-residue protein sequence, read N- to C-terminus: Protein FAM81A (364 aa).

3 coiled-coil regions span residues Phe-75–Ile-107, Asn-158–Ser-189, and Ala-261–Asn-287. A disordered region spans residues Glu-281 to His-300.

Belongs to the FAM81 family. As to quaternary structure, interacts with DLG4/PSD-95, GRIN2B/GLUN2B and SYNGAP1; the interactions facilitate condensate formation. As to expression, expressed in most regions of the brain (at protein level).

It is found in the postsynaptic density. The protein localises to the cytoplasm. In terms of biological role, facilitates the interaction and assembly of proteins within the postsynaptic density by promoting the condensation of postsynaptic proteins via liquid-liquid phase separation. Required for neuronal activity. Accumulation at the postsynaptic density results in enlargement of dendritic spines. This chain is Protein FAM81A (Fam81a), found in Mus musculus (Mouse).